We begin with the raw amino-acid sequence, 344 residues long: L-rhamnose-proton symporter (344 aa).

10 helical membrane passes run A4–A24, W38–L58, F68–I88, M101–I121, T137–L157, L175–A195, L214–V234, I259–G279, I290–L310, and V323–A343.

Belongs to the L-rhamnose transporter (TC 2.A.7.6) family.

It localises to the cell inner membrane. It carries out the reaction L-rhamnopyranose(in) + H(+)(in) = L-rhamnopyranose(out) + H(+)(out). Functionally, uptake of L-rhamnose across the cytoplasmic membrane with the concomitant transport of protons into the cell (symport system). The sequence is that of L-rhamnose-proton symporter from Citrobacter koseri (strain ATCC BAA-895 / CDC 4225-83 / SGSC4696).